The chain runs to 189 residues: uncharacterized protein (189 aa).

The segment covering 1-15 has biased composition (basic and acidic residues); that stretch reads MDKHGVKTPLWRKEV. Residues 1–77 form a disordered region; the sequence is MDKHGVKTPL…SPLRQESSSQ (77 aa). Acidic residues-rich tracts occupy residues 16 to 29 and 46 to 56; these read EDPE…EDDS and SATETEEDSRD. Over residues 65-77 the composition is skewed to polar residues; sequence VSYSPLRQESSSQ.

This is an uncharacterized protein from Mus musculus (Mouse).